The chain runs to 180 residues: Ribulose bisphosphate carboxylase small subunit 1A, chloroplastic (180 aa).

The transit peptide at 1–54 (MASSMLSSATMVASPAQATMVAPFNGLKSSAAFPATRKANNDITSITSNGGRVN) directs the protein to the chloroplast. Position 113 is a phosphoserine (Ser-113).

The protein belongs to the RuBisCO small chain family. As to quaternary structure, heterohexadecamer of 8 large and 8 small subunits.

Its subcellular location is the plastid. The protein localises to the chloroplast membrane. It is found in the chloroplast stroma. Functionally, ruBisCO catalyzes two reactions: the carboxylation of D-ribulose 1,5-bisphosphate, the primary event in carbon dioxide fixation, as well as the oxidative fragmentation of the pentose substrate. Both reactions occur simultaneously and in competition at the same active site. Although the small subunit is not catalytic it is essential for maximal activity. This Arabidopsis thaliana (Mouse-ear cress) protein is Ribulose bisphosphate carboxylase small subunit 1A, chloroplastic (RBCS-1A).